The following is a 325-amino-acid chain: tRNA dimethylallyltransferase (325 aa).

An ATP-binding site is contributed by 17–24 (GPTASGKT). Residue 19–24 (TASGKT) participates in substrate binding. Interaction with substrate tRNA regions lie at residues 42 to 45 (DSAL), 166 to 170 (QRIQR), 251 to 256 (RCVGYR), and 284 to 291 (KRQITWLR).

This sequence belongs to the IPP transferase family. As to quaternary structure, monomer. Mg(2+) is required as a cofactor.

It catalyses the reaction adenosine(37) in tRNA + dimethylallyl diphosphate = N(6)-dimethylallyladenosine(37) in tRNA + diphosphate. Its function is as follows. Catalyzes the transfer of a dimethylallyl group onto the adenine at position 37 in tRNAs that read codons beginning with uridine, leading to the formation of N6-(dimethylallyl)adenosine (i(6)A). In Burkholderia multivorans (strain ATCC 17616 / 249), this protein is tRNA dimethylallyltransferase.